Consider the following 1505-residue polypeptide: ABC transporter C family member 13 (1505 aa).

The next 12 helical transmembrane spans lie at 11-31 (EAAAAAAHAALLALALLLLLL), 54-68 (AVDGGLAAASSVGAW), 71-91 (AALACCGYALLAQVAALSYEV), 102-122 (ALLLPAVQALAWAALLALAMQ), 131-151 (FPVLVRVWWVVSFVLCVGIAY), 171-191 (MVANFASAPALGFLCLVGVMG), 313-333 (AFAAVNTIVSYVGPYLISYFV), 336-356 (LSGKIEFPHEGYILASVFFVA), 367-387 (WYLGVDVMGIHVKSGLTAMVY), 421-441 (AWYFHDIWMLPLQIILALAIL), 447-467 (IAMVSTLVATVLSIAASVPVA), and 534-554 (FVFWSSPIFVAVITFGTCILL). The region spanning 314–589 (FAAVNTIVSY…FPDLISMIAQ (276 aa)) is the ABC transmembrane type-1 1 domain. The ABC transporter 1 domain maps to 623–846 (ININDATFSW…GTDFNALVCA (224 aa)). 658–665 (GVIGSGKS) is an ATP binding site. The span at 881–897 (DNLKNKVSNNEKPSSTR) shows a compositional bias: polar residues. The interval 881–919 (DNLKNKVSNNEKPSSTRGIKEKKKKPEERKKKRSVQEEE) is disordered. Residues 904 to 919 (KKPEERKKKRSVQEEE) show a composition bias toward basic and acidic residues. The next 6 helical transmembrane spans lie at 940–960 (GTLIPLIILAQTMFQVLQIAS), 980–1000 (SVVLLVVYMSLAFGSSLFVFV), 1055–1077 (IAFRLGGFASTTIQLLGIVAVMS), 1081–1103 (WQVLILIVPMAVACMWMQRYYIA), 1149–1169 (LLDCFARPLFSSLAAIEWLCL), and 1174–1194 (LSTFVFAFCMAILVSFPPGTI). The 271-residue stretch at 945–1215 (LIILAQTMFQ…GLNLNARMSR (271 aa)) folds into the ABC transmembrane type-1 2 domain. The ABC transporter 2 domain occupies 1262-1496 (IELVDLKVRY…KSSMFMQLVS (235 aa)). Residue 1296-1303 (GRTGSGKS) coordinates ATP.

This sequence belongs to the ABC transporter superfamily. ABCC family. Conjugate transporter (TC 3.A.1.208) subfamily.

It is found in the membrane. Functionally, ABC transporter that may affect phytic acid transport and compartmentalization. May function directly or indirectly in removing phytic acid from the cytosol or in vesicle trafficking. Required for phytic acid accumulation in developing seeds. Phytic acid is the primary storage form of phosphorus in cereal grains and other plant seeds. In Oryza sativa subsp. indica (Rice), this protein is ABC transporter C family member 13.